Here is a 91-residue protein sequence, read N- to C-terminus: Probable Fe(2+)-trafficking protein (91 aa).

This sequence belongs to the Fe(2+)-trafficking protein family. Monomer.

Functionally, could be a mediator in iron transactions between iron acquisition and iron-requiring processes, such as synthesis and/or repair of Fe-S clusters in biosynthetic enzymes. This is Probable Fe(2+)-trafficking protein from Salmonella agona (strain SL483).